The following is a 343-amino-acid chain: uncharacterized protein (343 aa).

Helical transmembrane passes span 13 to 33 (VILY…SMCG), 44 to 64 (LWGY…ATLD), 71 to 91 (MHPV…LFFI), 121 to 141 (ILLL…LTGL), 148 to 168 (NASL…YLIF), 177 to 197 (FLGI…GDFS), 203 to 223 (VAVT…LDTV), 244 to 264 (VGGF…ELPL), 269 to 289 (YALG…YIAI), 296 to 316 (MVGA…FIIL), and 320 to 340 (FSIM…ILYW). 2 EamA domains span residues 55–192 (IFFG…YLLT) and 216–340 (FFWS…ILYW).

The protein belongs to the EamA transporter family.

It is found in the cell membrane. This is an uncharacterized protein from Methanothermobacter thermautotrophicus (strain ATCC 29096 / DSM 1053 / JCM 10044 / NBRC 100330 / Delta H) (Methanobacterium thermoautotrophicum).